We begin with the raw amino-acid sequence, 87 residues long: Small ribosomal subunit protein bS20 (87 aa).

Residues 1-26 are disordered; that stretch reads MANTAQAKKRVRQNIKQRERNSGLRS.

It belongs to the bacterial ribosomal protein bS20 family.

Its function is as follows. Binds directly to 16S ribosomal RNA. This is Small ribosomal subunit protein bS20 from Nitrosomonas eutropha (strain DSM 101675 / C91 / Nm57).